A 226-amino-acid polypeptide reads, in one-letter code: Phosphoglycolate phosphatase (226 aa).

The Nucleophile role is filled by Asp8. Mg(2+) is bound by residues Asp8 and Asp10. Lys152 contributes to the substrate binding site. Residues Asp175 and Asp179 each coordinate Mg(2+).

Belongs to the archaeal SPP-like hydrolase family. Requires Mg(2+) as cofactor.

It carries out the reaction 2-phosphoglycolate + H2O = glycolate + phosphate. Catalyzes the dephosphorylation of 2-phosphoglycolate. The chain is Phosphoglycolate phosphatase from Natronomonas pharaonis (strain ATCC 35678 / DSM 2160 / CIP 103997 / JCM 8858 / NBRC 14720 / NCIMB 2260 / Gabara) (Halobacterium pharaonis).